An 86-amino-acid polypeptide reads, in one-letter code: Chymotrypsin inhibitor (86 aa).

The first 22 residues, 1–22, serve as a signal peptide directing secretion; sequence MKLLFAIVALLALAFLCADISA.

It belongs to the protease inhibitor I13 (potato type I serine protease inhibitor) family. In terms of assembly, monomer. In terms of tissue distribution, expressed in the body wall, coelomocytes and at a lower level in intestine.

The protein localises to the secreted. Its function is as follows. Inhibits L.terrestris digestive chymotrypsin LT_CH 1 and bovine alpha-chymotrypsin. The chain is Chymotrypsin inhibitor from Lumbricus terrestris (Common earthworm).